The primary structure comprises 273 residues: Formamidopyrimidine-DNA glycosylase (273 aa).

The active-site Schiff-base intermediate with DNA is the Pro2. Glu3 serves as the catalytic Proton donor. The active-site Proton donor; for beta-elimination activity is the Lys57. Positions 90, 109, and 150 each coordinate DNA. An FPG-type zinc finger spans residues 235–269 (KVYGRAGKECPVCSSKIEEEKIGQRNSFWCGKCQF). The active-site Proton donor; for delta-elimination activity is the Arg259.

It belongs to the FPG family. In terms of assembly, monomer. Zn(2+) serves as cofactor.

It carries out the reaction Hydrolysis of DNA containing ring-opened 7-methylguanine residues, releasing 2,6-diamino-4-hydroxy-5-(N-methyl)formamidopyrimidine.. The catalysed reaction is 2'-deoxyribonucleotide-(2'-deoxyribose 5'-phosphate)-2'-deoxyribonucleotide-DNA = a 3'-end 2'-deoxyribonucleotide-(2,3-dehydro-2,3-deoxyribose 5'-phosphate)-DNA + a 5'-end 5'-phospho-2'-deoxyribonucleoside-DNA + H(+). Involved in base excision repair of DNA damaged by oxidation or by mutagenic agents. Acts as a DNA glycosylase that recognizes and removes damaged bases. Has a preference for oxidized purines, such as 7,8-dihydro-8-oxoguanine (8-oxoG). Has AP (apurinic/apyrimidinic) lyase activity and introduces nicks in the DNA strand. Cleaves the DNA backbone by beta-delta elimination to generate a single-strand break at the site of the removed base with both 3'- and 5'-phosphates. In Aliivibrio fischeri (strain MJ11) (Vibrio fischeri), this protein is Formamidopyrimidine-DNA glycosylase.